A 1096-amino-acid polypeptide reads, in one-letter code: Protein spire (1096 aa).

Disordered stretches follow at residues 1–79 (MTEH…GNGT) and 184–211 (VESQ…TSSV). Positions 37–51 (LSTSPDSANGDAQQA) are enriched in polar residues. Basic residues predominate over residues 53–65 (THTHIISHTHSKG). Composition is skewed to low complexity over residues 66–77 (AAKTQTQTQNGN) and 189–201 (QEAS…QKQP). The region spanning 111-366 (VTLNNILDSF…RALATETIEL (256 aa)) is the KIND domain. Residues 315–340 (KRWDDEAEEERNDTKELEHIIETCRN) are a coiled coil. WH2 domains lie at 436-454 (PYEI…LRKV) and 500-517 (PREQ…LKQI). 3 disordered regions span residues 560–588 (DDSS…AHLA), 614–656 (QECQ…PSFT), and 693–762 (QSNL…LGPW). Residues 574-585 (HQHHQQHQPHHA) are compositionally biased toward basic residues. 2 stretches are compositionally biased toward low complexity: residues 633-645 (APRQ…QAQA) and 714-725 (DAGSQSQSGASS). Residues 737-754 (EGDHSQTTDGPPRLDEAH) are compositionally biased toward basic and acidic residues. A spir-box region spans residues 780–800 (LSVTLAEIVHIRSVMTKAELE). The segment covering 874-894 (PASSSTPSPSHHAHQAHSSST) has biased composition (low complexity). Disordered regions lie at residues 874 to 899 (PASS…NIMD), 912 to 958 (RSES…APGH), and 997 to 1021 (RSME…SSTL). Over residues 921–941 (STVGSAPSSPKHQRSNMSTPG) the composition is skewed to polar residues.

Belongs to the spire family. As to quaternary structure, interacts with bsk, Rho1, Rac1, Cdc42 and wash. Interacts with capu. In terms of processing, phosphorylated by Jnk kinase (bsk).

The protein resides in the cytoplasm. It is found in the cytoskeleton. Its subcellular location is the perinuclear region. The protein localises to the cell membrane. It localises to the cytoplasmic vesicle membrane. Its function is as follows. Acts as an actin nucleation factor, remains associated with the slow-growing pointed end of the new filament. Promotes dissociation of capu from the barbed end of actin filaments. Involved in intracellular vesicle transport along actin fibers, providing a novel link between actin cytoskeleton dynamics and intracellular transport. Required for localization of determinants within the developing oocyte to the posterior pole and to the dorsal anterior corner. Links Rho family signaling and Jnk function to the actin cytoskeleton. This Drosophila pseudoobscura pseudoobscura (Fruit fly) protein is Protein spire.